Consider the following 684-residue polypeptide: Glycine--tRNA ligase beta subunit (684 aa).

It belongs to the class-II aminoacyl-tRNA synthetase family. In terms of assembly, tetramer of two alpha and two beta subunits.

The protein resides in the cytoplasm. The catalysed reaction is tRNA(Gly) + glycine + ATP = glycyl-tRNA(Gly) + AMP + diphosphate. In Pseudomonas fluorescens (strain ATCC BAA-477 / NRRL B-23932 / Pf-5), this protein is Glycine--tRNA ligase beta subunit.